The chain runs to 65 residues: Weak neurotoxin 6 (65 aa).

Cystine bridges form between C3/C24, C6/C11, C17/C42, C46/C57, and C58/C63.

It belongs to the three-finger toxin family. Ancestral subfamily. Orphan group II sub-subfamily. As to expression, expressed by the venom gland.

It localises to the secreted. Functionally, binds with low affinity to muscular (alpha-1-beta-1-delta-epsilon/CHRNA1-CHRNB1-CHRND-CHRNE) and very low affinity to neuronal (alpha-7/CHRNA7) nicotinic acetylcholine receptor (nAChR). The polypeptide is Weak neurotoxin 6 (Naja naja (Indian cobra)).